A 345-amino-acid polypeptide reads, in one-letter code: S-adenosylmethionine:tRNA ribosyltransferase-isomerase (345 aa).

Belongs to the QueA family. In terms of assembly, monomer.

It is found in the cytoplasm. It carries out the reaction 7-aminomethyl-7-carbaguanosine(34) in tRNA + S-adenosyl-L-methionine = epoxyqueuosine(34) in tRNA + adenine + L-methionine + 2 H(+). It functions in the pathway tRNA modification; tRNA-queuosine biosynthesis. Functionally, transfers and isomerizes the ribose moiety from AdoMet to the 7-aminomethyl group of 7-deazaguanine (preQ1-tRNA) to give epoxyqueuosine (oQ-tRNA). The polypeptide is S-adenosylmethionine:tRNA ribosyltransferase-isomerase (Shewanella halifaxensis (strain HAW-EB4)).